A 356-amino-acid polypeptide reads, in one-letter code: Dual-specificity RNA methyltransferase RlmN (356 aa).

Glutamate 87 (proton acceptor) is an active-site residue. A Radical SAM core domain is found at 106-339; it reads QEAKYTICVS…CTIRDSKGID (234 aa). Cysteine 113 and cysteine 344 form a disulfide bridge. The [4Fe-4S] cluster site is built by cysteine 120, cysteine 124, and cysteine 127. S-adenosyl-L-methionine-binding positions include 170-171, serine 202, 225-227, and asparagine 301; these read GE and SLH. Residue cysteine 344 is the S-methylcysteine intermediate of the active site.

This sequence belongs to the radical SAM superfamily. RlmN family. Requires [4Fe-4S] cluster as cofactor.

It localises to the cytoplasm. It catalyses the reaction adenosine(2503) in 23S rRNA + 2 reduced [2Fe-2S]-[ferredoxin] + 2 S-adenosyl-L-methionine = 2-methyladenosine(2503) in 23S rRNA + 5'-deoxyadenosine + L-methionine + 2 oxidized [2Fe-2S]-[ferredoxin] + S-adenosyl-L-homocysteine. It carries out the reaction adenosine(37) in tRNA + 2 reduced [2Fe-2S]-[ferredoxin] + 2 S-adenosyl-L-methionine = 2-methyladenosine(37) in tRNA + 5'-deoxyadenosine + L-methionine + 2 oxidized [2Fe-2S]-[ferredoxin] + S-adenosyl-L-homocysteine. Specifically methylates position 2 of adenine 2503 in 23S rRNA and position 2 of adenine 37 in tRNAs. m2A2503 modification seems to play a crucial role in the proofreading step occurring at the peptidyl transferase center and thus would serve to optimize ribosomal fidelity. This is Dual-specificity RNA methyltransferase RlmN from Sulfurimonas denitrificans (strain ATCC 33889 / DSM 1251) (Thiomicrospira denitrificans (strain ATCC 33889 / DSM 1251)).